We begin with the raw amino-acid sequence, 370 residues long: Histidinol-phosphate aminotransferase (370 aa).

An N6-(pyridoxal phosphate)lysine modification is found at Lys222.

The protein belongs to the class-II pyridoxal-phosphate-dependent aminotransferase family. Histidinol-phosphate aminotransferase subfamily. In terms of assembly, homodimer. Pyridoxal 5'-phosphate is required as a cofactor.

The catalysed reaction is L-histidinol phosphate + 2-oxoglutarate = 3-(imidazol-4-yl)-2-oxopropyl phosphate + L-glutamate. It functions in the pathway amino-acid biosynthesis; L-histidine biosynthesis; L-histidine from 5-phospho-alpha-D-ribose 1-diphosphate: step 7/9. This is Histidinol-phosphate aminotransferase from Bacillus cytotoxicus (strain DSM 22905 / CIP 110041 / 391-98 / NVH 391-98).